The primary structure comprises 259 residues: Leucine-rich repeat-containing protein 3B (259 aa).

Residues 1–33 (MNLVDLWLTRSLSMCLLLQSFVLMILCFHSASM) form the signal peptide. One can recognise an LRRNT domain in the interval 34–64 (CPKGCLCSSSGGLNVTCSNANLKEIPRDLPP). Asn-47 carries N-linked (GlcNAc...) asparagine glycosylation. 3 LRR repeats span residues 65–86 (ETVL…IFKD), 89–110 (QLRV…AFKG), and 114–135 (TLQT…AFNN). The N-linked (GlcNAc...) asparagine glycan is linked to Asn-94. The LRRCT domain occupies 145–197 (NPWHCDCTLQQVLRSMVSNHETAHNVICKTSVLDEHAGRPFLNAANDADLCNL). The helical transmembrane segment at 205 to 225 (AMLVTMFGWFTMVISYVVYYV) threads the bilayer.

This sequence belongs to the LRRC3 family.

Its subcellular location is the membrane. This chain is Leucine-rich repeat-containing protein 3B (LRRC3B), found in Bos taurus (Bovine).